Reading from the N-terminus, the 173-residue chain is Protein Rv3753c (173 aa).

This is Protein Rv3753c from Mycobacterium tuberculosis (strain ATCC 25618 / H37Rv).